The following is a 285-amino-acid chain: ATP synthase gamma chain (285 aa).

The protein belongs to the ATPase gamma chain family. F-type ATPases have 2 components, CF(1) - the catalytic core - and CF(0) - the membrane proton channel. CF(1) has five subunits: alpha(3), beta(3), gamma(1), delta(1), epsilon(1). CF(0) has three main subunits: a, b and c.

It is found in the cell membrane. Produces ATP from ADP in the presence of a proton gradient across the membrane. The gamma chain is believed to be important in regulating ATPase activity and the flow of protons through the CF(0) complex. The chain is ATP synthase gamma chain from Geobacillus sp. (strain WCH70).